An 824-amino-acid polypeptide reads, in one-letter code: MADRAEMFSLSTFHSLSPPGCRPPQDISLEEFDDEDLSEITDDCGLGLSYDSDHCEKDSLSLGRSEQPHPICSFQDDFQEFEMIDDNEEEDDEDEEEEEEEEEGDGEGQEGGDPGSEAPAPGPLIPSPSVEEPHKHRPTTLRLTTLGAQDSLNNNGGFDLVRPASWQETALCSPAPEALRELPGPLPATDTGPGGAQSPVRPGCDCEGNRPAEPPAPGGTSPSSDPGIEADLRSRSSGGRGGRRSSQELSSPGSDSEDAGGARLGRMISSISETELELSSDGGSSSSGRSSHLTNSIEEASSPASEPEPPREPPRRPAFLPVGPDDTNSEYESGSESEPDLSEDADSPWLLSNLVSRMISEGSSPIRCPGQCLSPAPRPPGEPVSPAGGAAQDSQDPEAAAGPGGVELVDMETLCAPPPPAPAAPRPGPAQPGPCLFLSNPTRDTITPLWAAPGRAARPGRACSAACSEEEDEEDDEEEEDAEDSAGSPGGRGTGPSAPRDASLVYDAVKYTLVVDEHTQLELVSLRRCAGLGHDSEEDSGGEASEEEAGAALLGGGQVSGDTSPDSPDLTFSKKFLNVFVNSTSRSSSTESFGLFSCLVNGEEREQTHRAVFRFIPRHPDELELDVDDPVLVEAEEDDFWFRGFNMRTGERGVFPAFYAHAVPGPAKDLLGSKRSPCWVERFDVQFLGSVEVPCHQGNGILCAAMQKIATARKLTVHLRPPASCDLEISLRGVKLSLSGGGPEFQRCSHFFQMKNISFCGCHPRNSCYFGFITKHPLLSRFACHVFVSQESMRPVAQSVGRAFLEYYQEHLAYACPTEDIYLE.

4 disordered regions span residues 1 to 28, 40 to 160, 172 to 349, and 361 to 501; these read MADRAEMFSLSTFHSLSPPGCRPPQDIS, ITDD…GFDL, CSPA…DSPW, and EGSS…APRD. The span at 77 to 110 shows a compositional bias: acidic residues; it reads DFQEFEMIDDNEEEDDEDEEEEEEEEEGDGEGQE. Residues 110–275 are JNK-binding domain (JBD); it reads EGGDPGSEAP…RMISSISETE (166 aa). Polar residues predominate over residues 141–156; the sequence is LRLTTLGAQDSLNNNG. The interval 239-498 is necessary for interaction with FGF13; sequence GRGGRRSSQE…PGGRGTGPSA (260 aa). Ser-254, Ser-302, and Ser-305 each carry phosphoserine. Positions 268-305 are enriched in low complexity; the sequence is ISSISETELELSSDGGSSSSGRSSHLTNSIEEASSPAS. Positions 327–346 are enriched in acidic residues; that stretch reads TNSEYESGSESEPDLSEDAD. The span at 416-432 shows a compositional bias: pro residues; that stretch reads APPPPAPAAPRPGPAQP. A compositionally biased stretch (low complexity) spans 451–467; the sequence is AAPGRAARPGRACSAAC. The span at 468–484 shows a compositional bias: acidic residues; sequence SEEEDEEDDEEEEDAED. Residues 604–665 enclose the SH3 domain; sequence EREQTHRAVF…PAFYAHAVPG (62 aa). In terms of domain architecture, PID spans 677 to 813; that stretch reads PCWVERFDVQ…FLEYYQEHLA (137 aa).

Belongs to the JIP scaffold family. In terms of assembly, forms homo- or heterooligomeric complexes. Binds specific components of the JNK signaling pathway namely JNK1, JNK2, JNK3, MAP2K7, MAP3K10, MAP3K11, MAP3K12 and MAPK13. Also binds the proline-rich domain-containing splice variant of apolipoprotein E receptor 2 (ApoER2). Binds the cytoplasmic tails of LRP1 and LRP2 (Megalin). Binds the TPR motif-containing C-terminal of kinesin light chain, Klc1, pre-assembled MAPK8IP1 scaffolding complexes are then transported as a cargo of kinesin, to the required subcellular location. Interacts with the cytoplasmic domain of APP. Interacts with DCLK2. Interacts with TIAM1 and TIAM2. Interacts with FGF13; enables the interaction with MAPK13 and may regulate the MAPK8IP2 scaffolding activity. Interacts with SH3RF2. In terms of tissue distribution, expressed mainly in the brain and pancreas, including insulin-secreting cells. In the nervous system, more abundantly expressed in the cerebellum, pituitary gland, occipital lobe and the amygdala. Also expressed in fetal brain. Very low levels found in uterus, ovary, prostate, colon, testis, adrenal gland, thyroid gland and salivary gland.

Its subcellular location is the cytoplasm. Its function is as follows. The JNK-interacting protein (JIP) group of scaffold proteins selectively mediates JNK signaling by aggregating specific components of the MAPK cascade to form a functional JNK signaling module. JIP2 inhibits IL1 beta-induced apoptosis in insulin-secreting cells. May function as a regulator of vesicle transport, through interactions with the JNK-signaling components and motor proteins. This chain is C-Jun-amino-terminal kinase-interacting protein 2 (MAPK8IP2), found in Homo sapiens (Human).